Here is a 127-residue protein sequence, read N- to C-terminus: Small ribosomal subunit protein uS11 (127 aa).

Belongs to the universal ribosomal protein uS11 family. As to quaternary structure, part of the 30S ribosomal subunit. Interacts with proteins S7 and S18. Binds to IF-3.

Functionally, located on the platform of the 30S subunit, it bridges several disparate RNA helices of the 16S rRNA. Forms part of the Shine-Dalgarno cleft in the 70S ribosome. In Rickettsia felis (strain ATCC VR-1525 / URRWXCal2) (Rickettsia azadi), this protein is Small ribosomal subunit protein uS11.